A 329-amino-acid chain; its full sequence is Peroxidase 30 (329 aa).

The signal sequence occupies residues 1–27 (MKTMTQLNIAVVVVVTVLIGMLRSSEA). Cystine bridges form between C38–C116, C71–C76, C122–C324, and C201–C234. Catalysis depends on H69, which acts as the Proton acceptor. D70, V73, G75, D77, and S79 together coordinate Ca(2+). N-linked (GlcNAc...) asparagine glycans are attached at residues N83 and N155. Positions 141-165 (SWSVPTGRRDGRISNKTEATNNIPP) are disordered. Residues 156–165 (KTEATNNIPP) are compositionally biased toward polar residues. Residue P164 coordinates substrate. N-linked (GlcNAc...) asparagine glycosylation is present at N169. H194 is a binding site for heme b. Residue T195 participates in Ca(2+) binding. N-linked (GlcNAc...) asparagine glycosylation is found at N210 and N240. The Ca(2+) site is built by D247, S250, and D255. N290 carries an N-linked (GlcNAc...) asparagine glycan.

Belongs to the peroxidase family. Classical plant (class III) peroxidase subfamily. Heme b serves as cofactor. Ca(2+) is required as a cofactor. Mainly expressed in roots.

It is found in the secreted. The catalysed reaction is 2 a phenolic donor + H2O2 = 2 a phenolic radical donor + 2 H2O. Its function is as follows. Removal of H(2)O(2), oxidation of toxic reductants, biosynthesis and degradation of lignin, suberization, auxin catabolism, response to environmental stresses such as wounding, pathogen attack and oxidative stress. These functions might be dependent on each isozyme/isoform in each plant tissue. The protein is Peroxidase 30 (PER30) of Arabidopsis thaliana (Mouse-ear cress).